A 511-amino-acid polypeptide reads, in one-letter code: Protein phosphatase 2C 7 (511 aa).

Positions 1 to 19 are cleaved as a signal peptide; that stretch reads MEEISPAVALTLGLANTMC. In terms of domain architecture, PPM-type phosphatase spans 188–501; that stretch reads LWGTISICGG…DNISIIVIDL (314 aa). Mn(2+) is bound by residues Asp242, Gly243, Asp432, and Asp492.

Belongs to the PP2C family. As to quaternary structure, interacts with PYL13. Mg(2+) serves as cofactor. Mn(2+) is required as a cofactor. Expressed in seeds.

It catalyses the reaction O-phospho-L-seryl-[protein] + H2O = L-seryl-[protein] + phosphate. The enzyme catalyses O-phospho-L-threonyl-[protein] + H2O = L-threonyl-[protein] + phosphate. Functionally, key component and repressor of the abscisic acid (ABA) signaling pathway that regulates numerous ABA responses, such as stomatal closure, seed germination and inhibition of vegetative growth. This Arabidopsis thaliana (Mouse-ear cress) protein is Protein phosphatase 2C 7 (HAB2).